A 202-amino-acid polypeptide reads, in one-letter code: MKLNSNVKIVAKKCILVPYEPCHVAKYHKWMENEEIRRLTGSEQLSLDEEYEMQKTWRNDEDKLTFIVLEMNESGEEVDHMLGDVNLFISTSPSTENPSDDVITGEVEVMIAEPRGRGKGIGEEAVRVIIAWAYENLKIEQFCVKITDDNTPSLSLFKKKLGFKQIGYSTAFKEFTFELPKNRLISEFSSFLEKNAEIKEYK.

The N-acetyltransferase domain maps to 34-184 (EEIRRLTGSE…FTFELPKNRL (151 aa)).

This sequence belongs to the acetyltransferase family. GNAT subfamily.

The sequence is that of N-acetyltransferase 9-like protein from Caenorhabditis elegans.